Consider the following 871-residue polypeptide: Protein translocase subunit SecA (871 aa).

ATP contacts are provided by residues Gln-80, 98–102 (GEGKT), and Asp-537. Residues 852–871 (MEKGKKKGGSHGLGKIRVKR) form a disordered region. Residues 855–871 (GKKKGGSHGLGKIRVKR) show a composition bias toward basic residues.

It belongs to the SecA family. In terms of assembly, monomer and homodimer. Part of the essential Sec protein translocation apparatus which comprises SecA, SecYEG and auxiliary proteins SecDF. Other proteins may also be involved.

Its subcellular location is the cell inner membrane. The protein resides in the cytoplasm. The catalysed reaction is ATP + H2O + cellular proteinSide 1 = ADP + phosphate + cellular proteinSide 2.. In terms of biological role, part of the Sec protein translocase complex. Interacts with the SecYEG preprotein conducting channel. Has a central role in coupling the hydrolysis of ATP to the transfer of proteins into and across the cell membrane, serving as an ATP-driven molecular motor driving the stepwise translocation of polypeptide chains across the membrane. The polypeptide is Protein translocase subunit SecA (Thermotoga neapolitana (strain ATCC 49049 / DSM 4359 / NBRC 107923 / NS-E)).